Here is a 155-residue protein sequence, read N- to C-terminus: Large ribosomal subunit protein uL16 (155 aa).

Positions 1-22 are disordered; the sequence is MLSPKRTKYRKQQRGRMKGKAT.

This sequence belongs to the universal ribosomal protein uL16 family. As to quaternary structure, part of the 50S ribosomal subunit.

Its function is as follows. Binds 23S rRNA and is also seen to make contacts with the A and possibly P site tRNAs. The protein is Large ribosomal subunit protein uL16 of Synechococcus sp. (strain JA-2-3B'a(2-13)) (Cyanobacteria bacterium Yellowstone B-Prime).